Consider the following 343-residue polypeptide: Sulfate/thiosulfate import ATP-binding protein CysA (343 aa).

Residues 3 to 237 (IRISHLRKQF…PASPFVYSFV (235 aa)) enclose the ABC transporter domain. Residue 35–42 (GPSGSGKT) coordinates ATP.

It belongs to the ABC transporter superfamily. Sulfate/tungstate importer (TC 3.A.1.6) family. The complex is composed of two ATP-binding proteins (CysA), two transmembrane proteins (CysT and CysW) and a solute-binding protein (CysP).

Its subcellular location is the cell inner membrane. It carries out the reaction sulfate(out) + ATP + H2O = sulfate(in) + ADP + phosphate + H(+). The enzyme catalyses thiosulfate(out) + ATP + H2O = thiosulfate(in) + ADP + phosphate + H(+). In terms of biological role, part of the ABC transporter complex CysAWTP involved in sulfate/thiosulfate import. Responsible for energy coupling to the transport system. In Xanthomonas campestris pv. campestris (strain ATCC 33913 / DSM 3586 / NCPPB 528 / LMG 568 / P 25), this protein is Sulfate/thiosulfate import ATP-binding protein CysA.